The following is a 304-amino-acid chain: Dihydroorotate dehydrogenase B (NAD(+)), catalytic subunit (304 aa).

Residues Ser20 and 44–45 (KA) contribute to the FMN site. Substrate is bound by residues Lys44 and 68 to 72 (NAIGL). FMN is bound by residues Asn98 and Asn126. A substrate-binding site is contributed by Asn126. Cys129 acts as the Nucleophile in catalysis. 2 residues coordinate FMN: Lys164 and Ile190. Residue 191-192 (NT) coordinates substrate. FMN contacts are provided by residues Gly216, 242 to 243 (GG), and 264 to 265 (GT).

Belongs to the dihydroorotate dehydrogenase family. Type 1 subfamily. In terms of assembly, heterotetramer of 2 PyrK and 2 PyrD type B subunits. The cofactor is FMN.

It localises to the cytoplasm. The catalysed reaction is (S)-dihydroorotate + NAD(+) = orotate + NADH + H(+). It functions in the pathway pyrimidine metabolism; UMP biosynthesis via de novo pathway; orotate from (S)-dihydroorotate (NAD(+) route): step 1/1. Its function is as follows. Catalyzes the conversion of dihydroorotate to orotate with NAD(+) as electron acceptor. The sequence is that of Dihydroorotate dehydrogenase B (NAD(+)), catalytic subunit (pyrD) from Oceanobacillus iheyensis (strain DSM 14371 / CIP 107618 / JCM 11309 / KCTC 3954 / HTE831).